A 397-amino-acid polypeptide reads, in one-letter code: Proteinase-activated receptor 2 (397 aa).

Positions 1 to 25 are cleaved as a signal peptide; sequence MRSLSLAWLLGGITLLAASASCNRT. A glycan (N-linked (GlcNAc...) asparagine) is linked at Asn23. A propeptide spans 26–36 (removed for receptor activation); it reads VNAPGPNSKGR. Residues 37-71 lie on the Extracellular side of the membrane; the sequence is SLIGRLDTPPPITGKGAPVEPGFSVDEFSASVLTG. A helical transmembrane segment spans residues 72 to 101; the sequence is KLTTVFLPVIYIIVFVIGLPSNGMALWVFF. The Cytoplasmic segment spans residues 102–108; that stretch reads FRTKKKH. A helical transmembrane segment spans residues 109 to 137; it reads PAVIYMANLALADLLSVIWFPLKISYHLH. Residues 138-149 are Extracellular-facing; the sequence is GNDWTYGDALCK. Cys148 and Cys226 are joined by a disulfide. A helical membrane pass occupies residues 150-177; the sequence is VLIGFFYGNMYCSILFMTCLSVQRYWVI. Residues 178 to 183 lie on the Cytoplasmic side of the membrane; that stretch reads VNPMGH. The helical transmembrane segment at 184-211 threads the bilayer; the sequence is SRKRANIAVGVSLAIWLLIFLVTIPLYV. The Extracellular portion of the chain corresponds to 212-235; sequence MRQTIYIPALNITTCHDVLPEEVL. N-linked (GlcNAc...) asparagine glycosylation occurs at Asn222. Residues 236–269 form a helical membrane-spanning segment; the sequence is VGDMFSYFLSLAIGVFLFPALLTASAYVLMIKTL. Residues 270 to 277 lie on the Cytoplasmic side of the membrane; it reads RSSAMDEH. A helical membrane pass occupies residues 278–317; sequence SEKKRRRAIRLIITVLSMYFICFAPSNVLLVVHYFLIKSQ. Topologically, residues 318–323 are extracellular; the sequence is RQSHVY. The chain crosses the membrane as a helical span at residues 324–347; that stretch reads ALYLVALCLSTLNSCIDPFVYYFV. The Cytoplasmic portion of the chain corresponds to 348-397; it reads SKDFRDQARNALLCRSVRTVKRMQISLTSNKFSRKSSSYSSSSTSVKTSY. A lipid anchor (S-palmitoyl cysteine) is attached at Cys361.

This sequence belongs to the G-protein coupled receptor 1 family. In terms of assembly, interacts with TLR4, COPS5 and TMED2. Interacts with GNAQ, GNA11, GNA12, GNA13 and GNA14. A proteolytic cleavage generates a new N-terminus that functions as a tethered ligand. Activating serine proteases include trypsin, mast cell tryptase, coagulation factors VII and Xa, myeloblastin/PRTN3 and membrane-type serine protease 1/ST14. Proposed subsequent cleavage by serine proteases is leading to receptor deactivation and include neutrophil elastase and cathepsin G. At least in part, implicated proteases are also shown to activate the receptor; the glycosylation status of the receptor is thought to contribute to the difference. Post-translationally, N-glycosylated and sialylated. In terms of processing, multiple phosphorylated on serine and threonine residues in the cytoplasmic region upon receptor activation; required for receptor desensitization and recruitment of beta-arrestin. Monoubiquitinated by Cbl at the plasma membrane and in early endosomes; not required for receptor endocytosis but for translocation to late endosomes or lysosomes. Deubiquitination involves Stambp and Usp8; required for lysosomal trafficking and receptor degradation.

Its subcellular location is the cell membrane. Functionally, receptor for trypsin and trypsin-like enzymes coupled to G proteins. Its function is mediated through the activation of several signaling pathways including phospholipase C (PLC), intracellular calcium, mitogen-activated protein kinase (MAPK), I-kappaB kinase/NF-kappaB and Rho. Can also be transactivated by cleaved F2R/PAR1. Involved in modulation of inflammatory responses and regulation of innate and adaptive immunity, and acts as a sensor for proteolytic enzymes generated during infection. Generally is promoting inflammation. Can signal synergistically with TLR4 and probably TLR2 in inflammatory responses and modulates Tlr3 signaling. Has a protective role in establishing the endothelial barrier; the activity involves coagulation factor X. Regulates endothelial cell barrier integrity during neutrophil extravasation, probably following proteolytic cleavage by PRTN3. Proposed to have a bronchoprotective role in airway epithelium, but also shown to compromise the airway epithelial barrier by interrupting E-cadherin adhesion. Involved in the regulation of vascular tone; activation results in hypotension presumably mediated by vasodilation. Associates with a subset of G proteins alpha subunits such as GNAQ, GNA11, GNA14, GNA12 and GNA13, but probably not with G(o)-alpha, G(i) subunit alpha-1 and G(i) subunit alpha-2. Believed to be a class B receptor which internalizes as a complex with arrestin and traffic with it to endosomal vesicles, presumably as desensitized receptor, for extended periods of time. Mediates inhibition of TNF-alpha stimulated JNK phosphorylation via coupling to G GNAQ and GNA11; the function involves dissociation of RIPK1 and Tradd from TNFR1. Mediates phosphorylation of nuclear factor NF-kappa-B RELA subunit at 'Ser-536'; the function involves Ikbkb and is predominantly independent of G proteins. Involved in cellular migration. Involved in cytoskeletal rearrangement and chemotaxis through beta-arrestin-promoted scaffolds; the function is independent of GNAQ and GNA11 and involves promotion of cofilin dephosphorylation and actin filament severing. Induces redistribution of COPS5 from the plasma membrane to the cytosol and activation of the JNK cascade is mediated by Cops5. Involved in the recruitment of leukocytes to the sites of inflammation and is the major PAR receptor capable of modulating eosinophil function such as pro-inflammatory cytokine secretion, superoxide production and degranulation. During inflammation promotes dendritic cell maturation, trafficking to the lymph nodes and subsequent T-cell activation. Involved in antimicrobial response of innate immune cells; activation enhances phagocytosis of Gram-positive and killing of Gram-negative bacteria. Acts synergistically with interferon-gamma in enhancing antiviral responses. Probably mediates activation of pro-inflammatory and pro-fibrotic responses in fibroblasts, triggered by coagulation factor Xa (F10). Probably mediates activation of barrier protective signaling responses in endothelial cells, triggered by coagulation factor Xa (F10). The chain is Proteinase-activated receptor 2 (F2rl1) from Rattus norvegicus (Rat).